The primary structure comprises 493 residues: Probable GTP-binding protein OBGM, mitochondrial (493 aa).

A mitochondrion-targeting transit peptide spans 1–28 (MWLIRAIVPVRYLGSYKRPQKPPWMRNP). Residues 48–303 (TRMRDRFTLY…AVLILELKSI (256 aa)) enclose the Obg domain. Disordered stretches follow at residues 65–89 (SGCS…GGRG) and 146–215 (GEIP…EDDD). Residues 187 to 196 (SESDQDDTEQ) show a composition bias toward acidic residues. Residues 304-476 (ADVGLVGMPN…LKDGLKMLVD (173 aa)) enclose the OBG-type G domain. Residues 310–317 (GMPNAGKS) and 356–360 (DIPGL) each bind GTP.

It belongs to the TRAFAC class OBG-HflX-like GTPase superfamily. OBG GTPase family.

The protein localises to the mitochondrion. Functionally, may bind GTP and have GTPase activity. This is Probable GTP-binding protein OBGM, mitochondrial (ATOBGM) from Arabidopsis thaliana (Mouse-ear cress).